A 211-amino-acid chain; its full sequence is Ribonuclease HII (211 aa).

The region spanning 1-205 (MRFGVDEAGK…CDDVLAAASQ (205 aa)) is the RNase H type-2 domain. A divalent metal cation contacts are provided by Asp-6, Glu-7, and Asp-100.

Belongs to the RNase HII family. The cofactor is Mn(2+). Mg(2+) is required as a cofactor.

It localises to the cytoplasm. It carries out the reaction Endonucleolytic cleavage to 5'-phosphomonoester.. In terms of biological role, endonuclease that specifically degrades the RNA of RNA-DNA hybrids. The chain is Ribonuclease HII from Haloarcula marismortui (strain ATCC 43049 / DSM 3752 / JCM 8966 / VKM B-1809) (Halobacterium marismortui).